Here is a 255-residue protein sequence, read N- to C-terminus: tRNA pseudouridine synthase A (255 aa).

Aspartate 52 acts as the Nucleophile in catalysis. Tyrosine 111 lines the substrate pocket.

Belongs to the tRNA pseudouridine synthase TruA family. As to quaternary structure, homodimer.

The catalysed reaction is uridine(38/39/40) in tRNA = pseudouridine(38/39/40) in tRNA. Formation of pseudouridine at positions 38, 39 and 40 in the anticodon stem and loop of transfer RNAs. The sequence is that of tRNA pseudouridine synthase A from Cereibacter sphaeroides (strain ATCC 17023 / DSM 158 / JCM 6121 / CCUG 31486 / LMG 2827 / NBRC 12203 / NCIMB 8253 / ATH 2.4.1.) (Rhodobacter sphaeroides).